The chain runs to 208 residues: MKRVALLFLVVICGMGGLGQKLKPKKRSNGEEINFRTKTKDVCTMRISGDEEMKARIECKGQGKSYWCEYTGMPLLCHPFQNNPKMYWNQITMELRKLPHACESTQMLKASMCQKAPVDALMKQVAAGVEPEDGANRDKSSQKTSASVRGAGKSSVKKTGKPAVLPRIKPTQHGQGSENETEAMKLAREHCWESLHEFCSYIIGFFRG.

The N-terminal stretch at 1-19 (MKRVALLFLVVICGMGGLG) is a signal peptide. Cystine bridges form between Cys43–Cys59, Cys68–Cys102, and Cys77–Cys113. The tract at residues 130–181 (EPEDGANRDKSSQKTSASVRGAGKSSVKKTGKPAVLPRIKPTQHGQGSENET) is disordered. Cys191 and Cys199 are joined by a disulfide.

The protein belongs to the fibroblast growth factor-binding protein family.

The protein localises to the secreted. The protein resides in the extracellular space. The protein is Fibroblast growth factor-binding protein 2 (FGFBP2) of Gallus gallus (Chicken).